A 106-amino-acid polypeptide reads, in one-letter code: COX assembly mitochondrial protein homolog (106 aa).

At alanine 2 the chain carries N-acetylalanine. Positions 28-71 (KERCSEQVQDFTKCCKNSGVLMVVKCRKENSALKECLTAYYNDP) constitute a CHCH domain. Short sequence motifs (cx9C motif) lie at residues 31–41 (CSEQVQDFTKC) and 53–63 (CRKENSALKEC). 2 disulfides stabilise this stretch: cysteine 31–cysteine 63 and cysteine 41–cysteine 53.

Belongs to the CMC family. Component of the MITRAC (mitochondrial translation regulation assembly intermediate of cytochrome c oxidase complex) complex, the core components of this complex being COA3/MITRAC12 and COX14.

The protein localises to the mitochondrion. In terms of biological role, component of the MITRAC (mitochondrial translation regulation assembly intermediate of cytochrome c oxidase complex) complex, that regulates cytochrome c oxidase assembly. This is COX assembly mitochondrial protein homolog (CMC1) from Homo sapiens (Human).